The chain runs to 174 residues: Major allergen Can f 1 (174 aa).

The first 18 residues, 1-18, serve as a signal peptide directing secretion; sequence MKTLLLTIGFSLIAILQA. Cys78 and Cys169 are joined by a disulfide. An N-linked (GlcNAc...) asparagine glycan is attached at Asn80.

The protein belongs to the calycin superfamily. Lipocalin family. Tongue epithelial tissue.

It localises to the secreted. The chain is Major allergen Can f 1 from Canis lupus familiaris (Dog).